A 660-amino-acid chain; its full sequence is MSSSNEQICLDEDWIQKFGDREIEFVDEAQKSEVDETEKSIKRFPLSVLQRKGLALINLRIGVVKTGFGGKTIIDFEKDPAFSNGEELPANSFSPGDVVSIRQDFQSSKKKRPNETDISVEGVVTRVHERHISVALKSEEDIPSSVTRLSVVKLVNRVTYERMRHTMLEFKRSIPEYRNSLFYTLIGRKKADVSIDQKLIGDIKYFNKELNASQKKAVKFSIAVKELSLIHGPPGTGKTHTLVEIIQQLVLRNKRILVCGASNLAVDNIVDRLSSSGIPMVRLGHPARLLPSILDHSLDVLSRTGDNGDVIRGISEDIDVCLSKITKTKNGRERREIYKNIRELRKDYRKYEAKTVANIVSASKVVFCTLHGAGSRQLKGQRFDAVIIDEASQALEPQCWIPLLGMNKVILAGDHMQLSPNVQSKRPYISMFERLVKSQGDLVKCFLNIQYRMHELISKFPSDTFYDSKLVPAEEVKKRLLMDLENVEETELTDSPIYFYDTLGNYQEDDRSEDMQNFYQDSKSNHWEAQIVSYHISGLLEAGLEAKDIAVVTPYNAQVALIRQLLKEKGIEVEMGSVDKVQGREKEAIIFSLVRSNDVREVGFLAEKRRLNVAITRPKRHLCVIGDSNTVKWASEFFHQWVDFLEENAIVMDIDATMFE.

Residue 232–239 participates in ATP binding; sequence GPPGTGKT.

The protein belongs to the DNA2/NAM7 helicase family. In terms of assembly, associates with the hexameric DNA polymerase alpha.

It is found in the cytoplasm. Its subcellular location is the nucleus. It catalyses the reaction ATP + H2O = ADP + phosphate + H(+). In terms of biological role, DNA polymerase alpha-associated DNA helicase which may be involved in DNA replication. This chain is DNA polymerase alpha-associated DNA helicase A (hcs1), found in Schizosaccharomyces pombe (strain 972 / ATCC 24843) (Fission yeast).